We begin with the raw amino-acid sequence, 477 residues long: Cobyric acid synthase (477 aa).

The GATase cobBQ-type domain occupies 248-432 (GLHIACPMLS…LHGLFSGDGF (185 aa)). Catalysis depends on Cys330, which acts as the Nucleophile. His424 is an active-site residue.

Belongs to the CobB/CobQ family. CobQ subfamily.

The protein operates within cofactor biosynthesis; adenosylcobalamin biosynthesis. Its function is as follows. Catalyzes amidations at positions B, D, E, and G on adenosylcobyrinic A,C-diamide. NH(2) groups are provided by glutamine, and one molecule of ATP is hydrogenolyzed for each amidation. The polypeptide is Cobyric acid synthase (Paracoccus denitrificans (strain Pd 1222)).